The chain runs to 421 residues: Gamma-glutamyl phosphate reductase (421 aa).

Belongs to the gamma-glutamyl phosphate reductase family.

The protein localises to the cytoplasm. The enzyme catalyses L-glutamate 5-semialdehyde + phosphate + NADP(+) = L-glutamyl 5-phosphate + NADPH + H(+). Its pathway is amino-acid biosynthesis; L-proline biosynthesis; L-glutamate 5-semialdehyde from L-glutamate: step 2/2. Catalyzes the NADPH-dependent reduction of L-glutamate 5-phosphate into L-glutamate 5-semialdehyde and phosphate. The product spontaneously undergoes cyclization to form 1-pyrroline-5-carboxylate. This is Gamma-glutamyl phosphate reductase from Brucella abortus (strain 2308).